Consider the following 78-residue polypeptide: Large ribosomal subunit protein bL28 (78 aa).

The protein belongs to the bacterial ribosomal protein bL28 family.

The protein is Large ribosomal subunit protein bL28 of Rippkaea orientalis (strain PCC 8801 / RF-1) (Cyanothece sp. (strain PCC 8801)).